We begin with the raw amino-acid sequence, 103 residues long: Co-chaperonin GroES (103 aa).

It belongs to the GroES chaperonin family. As to quaternary structure, heptamer of 7 subunits arranged in a ring. Interacts with the chaperonin GroEL.

The protein resides in the cytoplasm. Functionally, together with the chaperonin GroEL, plays an essential role in assisting protein folding. The GroEL-GroES system forms a nano-cage that allows encapsulation of the non-native substrate proteins and provides a physical environment optimized to promote and accelerate protein folding. GroES binds to the apical surface of the GroEL ring, thereby capping the opening of the GroEL channel. This is Co-chaperonin GroES from Prochlorococcus marinus (strain MIT 9313).